The chain runs to 328 residues: Putative UDP-N-acetylglucosamine--dolichyl-phosphate N-acetylglucosaminephosphotransferase (328 aa).

The next 9 helical transmembrane spans lie at 1-21 (MLVS…VTLI), 48-68 (VPVL…FTFL), 78-98 (IENV…LGLL), 107-127 (ATRA…SVGH), 129-149 (IISI…IIIL), 166-186 (LNGL…YIGL), 192-212 (SFYA…FLIF), 228-248 (FIGS…ALFF), and 301-321 (YHIV…AVVF).

This sequence belongs to the glycosyltransferase 4 family.

It localises to the cell membrane. The catalysed reaction is a di-trans,poly-cis-dolichyl phosphate + UDP-N-acetyl-alpha-D-glucosamine = an N-acetyl-alpha-D-glucosaminyl-diphospho-di-trans,poly-cis-dolichol + UMP. With respect to regulation, inhibited by tunicamycin. The sequence is that of Putative UDP-N-acetylglucosamine--dolichyl-phosphate N-acetylglucosaminephosphotransferase (gnpTA) from Sulfolobus acidocaldarius (strain ATCC 33909 / DSM 639 / JCM 8929 / NBRC 15157 / NCIMB 11770).